Reading from the N-terminus, the 219-residue chain is Cytidylate kinase (219 aa).

21–29 is a binding site for ATP; it reads GPAASGKGT.

This sequence belongs to the cytidylate kinase family. Type 1 subfamily.

It is found in the cytoplasm. The enzyme catalyses CMP + ATP = CDP + ADP. It carries out the reaction dCMP + ATP = dCDP + ADP. The protein is Cytidylate kinase of Rickettsia typhi (strain ATCC VR-144 / Wilmington).